The chain runs to 227 residues: 7-cyano-7-deazaguanine synthase (227 aa).

7 to 17 contacts ATP; sequence VSGGMDSLVAT. The Zn(2+) site is built by Cys187, Cys195, Cys198, and Cys201.

Belongs to the QueC family. Zn(2+) is required as a cofactor.

The enzyme catalyses 7-carboxy-7-deazaguanine + NH4(+) + ATP = 7-cyano-7-deazaguanine + ADP + phosphate + H2O + H(+). It functions in the pathway purine metabolism; 7-cyano-7-deazaguanine biosynthesis. Its function is as follows. Catalyzes the ATP-dependent conversion of 7-carboxy-7-deazaguanine (CDG) to 7-cyano-7-deazaguanine (preQ(0)). The protein is 7-cyano-7-deazaguanine synthase of Chlorobaculum tepidum (strain ATCC 49652 / DSM 12025 / NBRC 103806 / TLS) (Chlorobium tepidum).